Here is a 426-residue protein sequence, read N- to C-terminus: Enolase (426 aa).

A (2R)-2-phosphoglycerate-binding site is contributed by Gln-163. Glu-205 serves as the catalytic Proton donor. The Mg(2+) site is built by Asp-242, Glu-285, and Asp-312. Residues Lys-337, Arg-366, Ser-367, and Lys-388 each coordinate (2R)-2-phosphoglycerate. The Proton acceptor role is filled by Lys-337.

Belongs to the enolase family. Mg(2+) serves as cofactor.

The protein resides in the cytoplasm. Its subcellular location is the secreted. It localises to the cell surface. It catalyses the reaction (2R)-2-phosphoglycerate = phosphoenolpyruvate + H2O. It participates in carbohydrate degradation; glycolysis; pyruvate from D-glyceraldehyde 3-phosphate: step 4/5. In terms of biological role, catalyzes the reversible conversion of 2-phosphoglycerate (2-PG) into phosphoenolpyruvate (PEP). It is essential for the degradation of carbohydrates via glycolysis. The chain is Enolase from Rhodospirillum centenum (strain ATCC 51521 / SW).